A 369-amino-acid polypeptide reads, in one-letter code: tRNA/tmRNA (uracil-C(5))-methyltransferase (369 aa).

Residues Gln190, Tyr218, Asn223, Glu239, and Asp301 each contribute to the S-adenosyl-L-methionine site. Cys326 functions as the Nucleophile in the catalytic mechanism. Residue Glu360 is the Proton acceptor of the active site.

Belongs to the class I-like SAM-binding methyltransferase superfamily. RNA M5U methyltransferase family. TrmA subfamily.

It catalyses the reaction uridine(54) in tRNA + S-adenosyl-L-methionine = 5-methyluridine(54) in tRNA + S-adenosyl-L-homocysteine + H(+). It carries out the reaction uridine(341) in tmRNA + S-adenosyl-L-methionine = 5-methyluridine(341) in tmRNA + S-adenosyl-L-homocysteine + H(+). In terms of biological role, dual-specificity methyltransferase that catalyzes the formation of 5-methyluridine at position 54 (m5U54) in all tRNAs, and that of position 341 (m5U341) in tmRNA (transfer-mRNA). This chain is tRNA/tmRNA (uracil-C(5))-methyltransferase, found in Vibrio vulnificus (strain YJ016).